Consider the following 329-residue polypeptide: tRNA N6-adenosine threonylcarbamoyltransferase (329 aa).

Fe cation-binding residues include histidine 108, histidine 112, and tyrosine 129. Substrate contacts are provided by residues 129 to 133, aspartate 161, glutamate 182, and serine 261; that span reads YVSGG. Aspartate 289 serves as a coordination point for Fe cation.

Belongs to the KAE1 / TsaD family. Fe(2+) is required as a cofactor.

It localises to the cytoplasm. It catalyses the reaction L-threonylcarbamoyladenylate + adenosine(37) in tRNA = N(6)-L-threonylcarbamoyladenosine(37) in tRNA + AMP + H(+). Required for the formation of a threonylcarbamoyl group on adenosine at position 37 (t(6)A37) in tRNAs that read codons beginning with adenine. Is probably involved in the transfer of the threonylcarbamoyl moiety of threonylcarbamoyl-AMP (TC-AMP) to the N6 group of A37. This Ignicoccus hospitalis (strain KIN4/I / DSM 18386 / JCM 14125) protein is tRNA N6-adenosine threonylcarbamoyltransferase.